We begin with the raw amino-acid sequence, 939 residues long: Zinc finger RNA-binding protein 2 (939 aa).

Disordered stretches follow at residues 1-72 (MATS…AYGS), 116-185 (GRMT…IVTS), 217-264 (FYPP…PKAG), 289-314 (HLGG…SPRG), 360-389 (LEPA…ASSR), 401-449 (ALCE…DAQP), 545-590 (RLEE…SSDD), and 906-939 (RLGA…EGLV). Polar residues-rich tracts occupy residues 137–147 (PHGSHSHAQPP) and 157–184 (QPAS…SIVT). Pro residues predominate over residues 217–239 (FYPPAQPPPPPGPPQQLPPPPAP). Residues 516-549 (KVLEERMRKQRHLAEERLEQLRRWHAERRRLEEE) are a coiled coil. A DZF domain is found at 570–935 (RPESPASAPL…GEKKRGRRGG (366 aa)). Residues 906–916 (RLGARFRKRQR) show a composition bias toward basic residues.

The protein is Zinc finger RNA-binding protein 2 (ZFR2) of Homo sapiens (Human).